Reading from the N-terminus, the 369-residue chain is Probable dual-specificity RNA methyltransferase RlmN (369 aa).

The active-site Proton acceptor is Glu108. In terms of domain architecture, Radical SAM core spans 114–352 (YPDRATLCIS…CTVRDTKGQE (239 aa)). A disulfide bond links Cys121 and Cys357. [4Fe-4S] cluster contacts are provided by Cys128, Cys132, and Cys135. S-adenosyl-L-methionine contacts are provided by residues 178-179 (GE), Ser212, 235-237 (SLH), and Asn314. Catalysis depends on Cys357, which acts as the S-methylcysteine intermediate.

This sequence belongs to the radical SAM superfamily. RlmN family. It depends on [4Fe-4S] cluster as a cofactor.

Its subcellular location is the cytoplasm. The enzyme catalyses adenosine(2503) in 23S rRNA + 2 reduced [2Fe-2S]-[ferredoxin] + 2 S-adenosyl-L-methionine = 2-methyladenosine(2503) in 23S rRNA + 5'-deoxyadenosine + L-methionine + 2 oxidized [2Fe-2S]-[ferredoxin] + S-adenosyl-L-homocysteine. It catalyses the reaction adenosine(37) in tRNA + 2 reduced [2Fe-2S]-[ferredoxin] + 2 S-adenosyl-L-methionine = 2-methyladenosine(37) in tRNA + 5'-deoxyadenosine + L-methionine + 2 oxidized [2Fe-2S]-[ferredoxin] + S-adenosyl-L-homocysteine. Its function is as follows. Specifically methylates position 2 of adenine 2503 in 23S rRNA and position 2 of adenine 37 in tRNAs. The chain is Probable dual-specificity RNA methyltransferase RlmN from Corynebacterium efficiens (strain DSM 44549 / YS-314 / AJ 12310 / JCM 11189 / NBRC 100395).